Here is a 222-residue protein sequence, read N- to C-terminus: 7-cyano-7-deazaguanine synthase (222 aa).

ATP is bound at residue 14–24 (FSGGQDSTTCL). Residues Cys-190, Cys-199, Cys-202, and Cys-205 each contribute to the Zn(2+) site.

This sequence belongs to the QueC family. Homodimer. It depends on Zn(2+) as a cofactor.

It catalyses the reaction 7-carboxy-7-deazaguanine + NH4(+) + ATP = 7-cyano-7-deazaguanine + ADP + phosphate + H2O + H(+). It functions in the pathway purine metabolism; 7-cyano-7-deazaguanine biosynthesis. Catalyzes the ATP-dependent conversion of 7-carboxy-7-deazaguanine (CDG) to 7-cyano-7-deazaguanine (preQ(0)). This chain is 7-cyano-7-deazaguanine synthase, found in Staphylococcus aureus (strain bovine RF122 / ET3-1).